A 657-amino-acid polypeptide reads, in one-letter code: MLSSTFVRSKAGLVPVILAALILAACTGDAPQTPPPVNIQDEASANSDYYLQQLQQSSDDNKADWQLLAIRALLREAKVPQAAEQLSTLPANLSDTQRQEQQLLAAELLIAQKNTPAAADILAKLEATQLSANQKVRYYQAQIAANQDKATLPLIRAFIAQEPLLTDKAHQDNIDGTWQSLSQLTPQELNTMVINADENVLQGWLDLLRVYQDNKQDPKLLKAGIKDWQTRYPQNPAAKNLPTALTQISNFSQASTAKIALLLPLSGPAQVFADAIQQGFTAAQNGSAVTASVPVTPNVTESSPTDTAAVVSDDTPATLPAPVPPPVVTNAQVKIYDTNTQPLAALLAQAQQDGATLVVGPLLKPEVEQLSATPSTLNILALNQPEASNNSPNICYFALSPEDEARDAAHHLWEQQKRMPLLLVPRGALGERIAKAFADEWQKQGGQTVLQQNFGSTTELKQSINSGAGIRLTGTPVSVSNVAAAPASVTIAGLTIPAPPIDAPVVSTSSSGNIDAVYIIATPSELTLIKPMIDMATSSRSKPALFASSRSYQAGAGPDYRLEMEGIQFSDIPLMAGSNPALLQQASAKYANDYSLVRLYAMGIDAWALANHFSEMRQIPGFQVKGVTGDLTASSDCVITRKLPWLQYRQGMVVPLA.

Positions 1-25 (MLSSTFVRSKAGLVPVILAALILAA) are cleaved as a signal peptide. A lipid anchor (N-palmitoyl cysteine) is attached at cysteine 26. The S-diacylglycerol cysteine moiety is linked to residue cysteine 26.

It belongs to the LpoA family. In terms of assembly, interacts with PBP1a.

It localises to the cell outer membrane. Its function is as follows. Regulator of peptidoglycan synthesis that is essential for the function of penicillin-binding protein 1A (PBP1a). This is Penicillin-binding protein activator LpoA from Yersinia pestis bv. Antiqua (strain Angola).